The following is a 79-amino-acid chain: MKLTCVLIITVLFLTASQLITADYSRDQRQYRAVRLGDEMRNFKGARDCGGQGKGCYTQPCCPGLRCRGGGTGGGVCQP.

The first 22 residues, 1–22 (MKLTCVLIITVLFLTASQLITA), serve as a signal peptide directing secretion. The propeptide occupies 23–47 (DYSRDQRQYRAVRLGDEMRNFKGAR). Intrachain disulfides connect Cys49–Cys62, Cys56–Cys67, and Cys61–Cys77.

The protein belongs to the conotoxin O1 superfamily. Expressed by the venom duct.

It localises to the secreted. The chain is Conotoxin 12 from Conus vexillum (Flag cone).